Reading from the N-terminus, the 187-residue chain is Transmembrane protein 272 (187 aa).

4 consecutive transmembrane segments (helical) span residues 21–41 (CFVVVLCAFLALPLSMTFIGM), 52–72 (LIPLYLLVGGIVGTLKVSLLL), 107–127 (IHLLLSLFLFLWFILGNYWVF), and 149–169 (LYLFAVGVLALSHTVLVLLLL).

The protein resides in the membrane. The polypeptide is Transmembrane protein 272 (Homo sapiens (Human)).